A 448-amino-acid polypeptide reads, in one-letter code: Signal recognition particle 54 kDa protein (448 aa).

Residues 107–114, 189–193, and 247–250 contribute to the GTP site; these read GIQGSGKT, DSAGR, and TKLD.

This sequence belongs to the GTP-binding SRP family. SRP54 subfamily. Part of the signal recognition particle protein translocation system, which is composed of SRP and FtsY. Archaeal SRP consists of a 7S RNA molecule of 300 nucleotides and two protein subunits: SRP54 and SRP19.

The protein resides in the cytoplasm. It carries out the reaction GTP + H2O = GDP + phosphate + H(+). Functionally, involved in targeting and insertion of nascent membrane proteins into the cytoplasmic membrane. Binds to the hydrophobic signal sequence of the ribosome-nascent chain (RNC) as it emerges from the ribosomes. The SRP-RNC complex is then targeted to the cytoplasmic membrane where it interacts with the SRP receptor FtsY. This Thermococcus kodakarensis (strain ATCC BAA-918 / JCM 12380 / KOD1) (Pyrococcus kodakaraensis (strain KOD1)) protein is Signal recognition particle 54 kDa protein.